A 270-amino-acid chain; its full sequence is Gap junction beta-3 protein (270 aa).

The Cytoplasmic portion of the chain corresponds to M1–F20. Residues G21 to A40 traverse the membrane as a helical segment. Over E41–R75 the chain is Extracellular. The chain crosses the membrane as a helical span at residues L76 to R98. The Cytoplasmic portion of the chain corresponds to E99–G126. The helical transmembrane segment at L127–L149 threads the bilayer. Residues H150–T188 lie on the Extracellular side of the membrane. Residues Y189–F211 form a helical membrane-spanning segment. The Cytoplasmic portion of the chain corresponds to H212 to I270.

The protein belongs to the connexin family. Beta-type (group I) subfamily. As to quaternary structure, a connexon is composed of a hexamer of connexins. Interacts with CNST.

The protein resides in the cell membrane. The protein localises to the cell junction. Its subcellular location is the gap junction. Its function is as follows. One gap junction consists of a cluster of closely packed pairs of transmembrane channels, the connexons, through which materials of low MW diffuse from one cell to a neighboring cell. The chain is Gap junction beta-3 protein (Gjb3) from Rattus norvegicus (Rat).